The sequence spans 361 residues: Mycothiol acetyltransferase (361 aa).

N-acetyltransferase domains are found at residues 25 to 173 (PRVR…LPGS) and 195 to 361 (VTVL…AWKF). Residue Glu-59 coordinates 1D-myo-inositol 2-(L-cysteinylamino)-2-deoxy-alpha-D-glucopyranoside. 98–100 (LAV) is an acetyl-CoA binding site. Residues Glu-229, Lys-280, and Glu-295 each coordinate 1D-myo-inositol 2-(L-cysteinylamino)-2-deoxy-alpha-D-glucopyranoside. Residues 299–301 (IGL) and 306–312 (QGRGLGR) each bind acetyl-CoA. Tyr-333 is a binding site for 1D-myo-inositol 2-(L-cysteinylamino)-2-deoxy-alpha-D-glucopyranoside. 338-343 (NAPAVH) serves as a coordination point for acetyl-CoA.

It belongs to the acetyltransferase family. MshD subfamily. Monomer.

It catalyses the reaction 1D-myo-inositol 2-(L-cysteinylamino)-2-deoxy-alpha-D-glucopyranoside + acetyl-CoA = mycothiol + CoA + H(+). Functionally, catalyzes the transfer of acetyl from acetyl-CoA to desacetylmycothiol (Cys-GlcN-Ins) to form mycothiol. The protein is Mycothiol acetyltransferase of Corynebacterium kroppenstedtii (strain DSM 44385 / JCM 11950 / CIP 105744 / CCUG 35717).